A 456-amino-acid polypeptide reads, in one-letter code: Ezy-1 protein (456 aa).

The first 28 residues, Met-1–Ala-28, serve as a signal peptide directing secretion. Disordered stretches follow at residues Ser-167–Gly-189, Phe-273–Gly-310, and Gln-414–Met-456. Residues Ala-281 to Glu-293 show a composition bias toward acidic residues. A compositionally biased stretch (basic and acidic residues) spans Asp-418 to Glu-428.

This is Ezy-1 protein (Ezy-1) from Chlamydomonas reinhardtii (Chlamydomonas smithii).